Consider the following 338-residue polypeptide: Aspartate carbamoyltransferase catalytic subunit (338 aa).

Arg59 and Thr60 together coordinate carbamoyl phosphate. Lys87 contributes to the L-aspartate binding site. Carbamoyl phosphate contacts are provided by Arg109, His142, and Gln145. L-aspartate contacts are provided by Arg182 and Arg253. The carbamoyl phosphate site is built by Gly294 and Pro295.

The protein belongs to the aspartate/ornithine carbamoyltransferase superfamily. ATCase family. Heterododecamer (2C3:3R2) of six catalytic PyrB chains organized as two trimers (C3), and six regulatory PyrI chains organized as three dimers (R2).

The catalysed reaction is carbamoyl phosphate + L-aspartate = N-carbamoyl-L-aspartate + phosphate + H(+). It functions in the pathway pyrimidine metabolism; UMP biosynthesis via de novo pathway; (S)-dihydroorotate from bicarbonate: step 2/3. Catalyzes the condensation of carbamoyl phosphate and aspartate to form carbamoyl aspartate and inorganic phosphate, the committed step in the de novo pyrimidine nucleotide biosynthesis pathway. The chain is Aspartate carbamoyltransferase catalytic subunit from Prochlorococcus marinus (strain MIT 9301).